The primary structure comprises 296 residues: MAAGGPGAGSAAPISSTSSLPLAALNMRVRRRLSLFLNVRTQVAADWTALAEEMDFEYLEIRQLETHADPTGRLLDAWQGRPGASVGRLLELLTKLGRDDVLLELGPSIEEDCQKYILKQQQEEAEKPLQVAAVDSSVPRTAELAGITTLDDPLGHMPERFDAFICYCPSDIQFVQEMIRQLEQTNYRLKLCVSDRDVLPGTCVWSIASELIEKRCRRMVVVVSDDYLQSKECDFQTKFALSLSPGAHQKRLIPIKYKAMKKEFPSILRFITVCDYTNPCTKSWFWTRLAKALSLP.

The Death domain occupies 32–109 (RLSLFLNVRT…DVLLELGPSI (78 aa)). Positions 110 to 155 (EEDCQKYILKQQQEEAEKPLQVAAVDSSVPRTAELAGITTLDDPLG) are intermediate domain. Residues 159–293 (ERFDAFICYC…WFWTRLAKAL (135 aa)) enclose the TIR domain. Position 244 is a phosphoserine (S244).

In terms of assembly, homodimer. Also forms heterodimers with TIRAP. Binds to TLR2, TLR4, IRAK1, IRAK2 and IRAK4 via their respective TIR domains. Interacts with IL18R1. Interacts with BMX, IL1RL1, IKBKE and IRF7. Interacts with LRRFIP1 and LRRFIP2; this interaction positively regulates Toll-like receptor (TLR) signaling in response to agonist. Interacts with FLII. LRRFIP1 and LRRFIP2 compete with FLII for MYD88-binding. Interacts with IRF1. Upon IL1B treatment, forms a complex with PELI1, IRAK1, IRAK4 and TRAF6; this complex recruits MAP3K7/TAK1, TAB1 and TAB2 to mediate NF-kappa-B activation. Direct binding of SMAD6 to PELI1 prevents the complex formation and hence negatively regulates IL1R-TLR signaling and eventually NF-kappa-B-mediated gene expression. May interact with PIK3AP1. Interacts (via TIR domain) with DHX9 (via H2A and OB-fold regions); this interaction is direct. Interacts with OTUD4 deubiquitinase; the interaction is direct. Post-translationally, ubiquitinated; undergoes 'Lys-63'-linked polyubiquitination. OTUD4 specifically hydrolyzes 'Lys-63'-linked polyubiquitinated MYD88. Deubiquitinated by USP3 that cleaves 'Lys-63'-linked ubiquitin chains leading to inhibition of MYD88-induced NF-kappa-B signaling.

It is found in the cytoplasm. The protein resides in the nucleus. Functionally, adapter protein involved in the Toll-like receptor and IL-1 receptor signaling pathway in the innate immune response. Acts via IRAK1, IRAK2, IRF7 and TRAF6, leading to NF-kappa-B activation, cytokine secretion and the inflammatory response. Increases IL-8 transcription. Involved in IL-18-mediated signaling pathway. Activates IRF1 resulting in its rapid migration into the nucleus to mediate an efficient induction of IFN-beta, NOS2/INOS, and IL12A genes. Upon TLR8 activation by GU-rich single-stranded RNA (GU-rich RNA) derived from viruses, induces IL1B release through NLRP3 inflammasome activation. MyD88-mediated signaling in intestinal epithelial cells is crucial for maintenance of gut homeostasis and controls the expression of the antimicrobial lectin REG3G in the small intestine. The sequence is that of Myeloid differentiation primary response protein MyD88 (MYD88) from Pan paniscus (Pygmy chimpanzee).